Reading from the N-terminus, the 148-residue chain is Large-conductance mechanosensitive channel (148 aa).

Helical transmembrane passes span 16-36 (VMDL…VNSI) and 89-109 (GSFI…FLMV).

Belongs to the MscL family. As to quaternary structure, homopentamer.

It is found in the cell inner membrane. Channel that opens in response to stretch forces in the membrane lipid bilayer. May participate in the regulation of osmotic pressure changes within the cell. This Paraburkholderia xenovorans (strain LB400) protein is Large-conductance mechanosensitive channel.